The sequence spans 125 residues: Histone H2A (125 aa).

The segment covering 1 to 18 (MSGRGKGGKARAKAKSRS) has biased composition (basic residues). The segment at 1–21 (MSGRGKGGKARAKAKSRSSRA) is disordered. Ser-2 bears the N-acetylserine mark. Residue Ser-2 is modified to Phosphoserine. Gln-104 carries the N5-methylglutamine modification.

This sequence belongs to the histone H2A family. The nucleosome is a histone octamer containing two molecules each of H2A, H2B, H3 and H4 assembled in one H3-H4 heterotetramer and two H2A-H2B heterodimers. The octamer wraps approximately 147 bp of DNA.

The protein resides in the nucleus. Its subcellular location is the chromosome. Functionally, core component of nucleosome. Nucleosomes wrap and compact DNA into chromatin, limiting DNA accessibility to the cellular machineries which require DNA as a template. Histones thereby play a central role in transcription regulation, DNA repair, DNA replication and chromosomal stability. DNA accessibility is regulated via a complex set of post-translational modifications of histones, also called histone code, and nucleosome remodeling. This is Histone H2A from Asterias rubens (Common European starfish).